We begin with the raw amino-acid sequence, 983 residues long: Receptor-like protein 19 (983 aa).

The N-terminal stretch at methionine 1–serine 25 is a signal peptide. Topologically, residues threonine 26–tryptophan 937 are extracellular. N-linked (GlcNAc...) asparagine glycosylation is found at asparagine 66 and asparagine 102. LRR repeat units follow at residues phenylalanine 82 to leucine 108, leucine 111 to leucine 135, serine 136 to leucine 159, histidine 161 to leucine 183, serine 184 to leucine 207, tyrosine 209 to leucine 231, phenylalanine 232 to leucine 255, serine 256 to cysteine 281, threonine 283 to asparagine 302, leucine 303 to leucine 327, arginine 328 to leucine 351, asparagine 353 to isoleucine 375, proline 376 to serine 399, serine 401 to leucine 424, valine 425 to histidine 448, lysine 450 to serine 474, phenylalanine 475 to asparagine 498, leucine 501 to glutamine 524, glutamate 525 to leucine 548, valine 550 to glycine 571, proline 578 to leucine 602, proline 603 to serine 628, proline 629 to serine 652, isoleucine 654 to isoleucine 674, serine 675 to glutamate 700, glutamine 702 to phenylalanine 720, serine 721 to asparagine 744, leucine 793 to leucine 817, lysine 818 to asparagine 840, leucine 841 to leucine 865, and tyrosine 867 to threonine 890. 6 N-linked (GlcNAc...) asparagine glycosylation sites follow: asparagine 137, asparagine 158, asparagine 171, asparagine 190, asparagine 195, and asparagine 206. N-linked (GlcNAc...) asparagine glycans are attached at residues asparagine 254 and asparagine 278. N-linked (GlcNAc...) asparagine glycosylation occurs at asparagine 347. 3 N-linked (GlcNAc...) asparagine glycosylation sites follow: asparagine 389, asparagine 396, and asparagine 402. Residues asparagine 456, asparagine 461, asparagine 492, and asparagine 498 are each glycosylated (N-linked (GlcNAc...) asparagine). N-linked (GlcNAc...) asparagine glycans are attached at residues asparagine 555, asparagine 558, asparagine 590, and asparagine 616. N-linked (GlcNAc...) asparagine glycosylation is found at asparagine 734 and asparagine 744. Residue asparagine 824 is glycosylated (N-linked (GlcNAc...) asparagine). An N-linked (GlcNAc...) asparagine glycan is attached at asparagine 872. Residues isoleucine 938 to leucine 958 form a helical membrane-spanning segment. Over phenylalanine 959–histidine 983 the chain is Cytoplasmic.

It belongs to the RLP family.

Its subcellular location is the cell membrane. The sequence is that of Receptor-like protein 19 from Arabidopsis thaliana (Mouse-ear cress).